A 288-amino-acid polypeptide reads, in one-letter code: ATP synthase gamma chain (288 aa).

It belongs to the ATPase gamma chain family. As to quaternary structure, F-type ATPases have 2 components, CF(1) - the catalytic core - and CF(0) - the membrane proton channel. CF(1) has five subunits: alpha(3), beta(3), gamma(1), delta(1), epsilon(1). CF(0) has three main subunits: a, b and c.

Its subcellular location is the cell membrane. Its function is as follows. Produces ATP from ADP in the presence of a proton gradient across the membrane. The gamma chain is believed to be important in regulating ATPase activity and the flow of protons through the CF(0) complex. This is ATP synthase gamma chain from Macrococcus caseolyticus (strain JCSC5402) (Macrococcoides caseolyticum).